The following is a 154-amino-acid chain: MKAQKGFTLIELMIVVAIIGILAAIAIPQYQDYTARTQVTRAVSEVSALKTAAESAILEGKEIVSSATPKDTQYDIGFTESTLLDGSGKSQIQVTDNQDGTVELVATLGKSSGSAIKGAVITVSRKNDGVWNCKITKTPTAWKPNYAPANCPKS.

The propeptide at 1–6 (MKAQKG) is leader sequence. Phe-7 is subject to N-methylphenylalanine. The helical transmembrane segment at 7–27 (FTLIELMIVVAIIGILAAIAI) threads the bilayer. Cys-133 and Cys-151 are disulfide-bonded. An O-linked (FucNAc...) serine glycan is attached at Ser-154.

The protein belongs to the N-Me-Phe pilin family. As to quaternary structure, the pili are polar flexible filaments of about 5.4 nanometers diameter and 2.5 micrometers average length; they consist of only a single polypeptide chain arranged in a helical configuration of five subunits per turn in the assembled pilus. In terms of processing, O-glycosylated; glycan consists of 5NbetaOHC47NFmPse(alpha2-4)Xyl(beta1-3)FucNAc in beta1-O linkage to Ser.

It localises to the fimbrium. It is found in the membrane. This is Fimbrial protein (pilA) from Pseudomonas aeruginosa.